A 148-amino-acid chain; its full sequence is MKLDLKILDARMRDYMPAYATTGSAGLDLRACLDAPVTLQPGETTLVPTGLAIHLADPGYAALILPRSGLGHKHGIVLGNLVGLIDSDYQGQLMVSTWNRGQTEFVLNPFERLAQLVIVPVVQAQFNIVDDFAQSERGEGGFGSTGRH.

Substrate-binding positions include 67 to 69, Asn-80, 84 to 86, and Met-94; these read RSG and LID.

Belongs to the dUTPase family. Mg(2+) is required as a cofactor.

The enzyme catalyses dUTP + H2O = dUMP + diphosphate + H(+). The protein operates within pyrimidine metabolism; dUMP biosynthesis; dUMP from dCTP (dUTP route): step 2/2. This enzyme is involved in nucleotide metabolism: it produces dUMP, the immediate precursor of thymidine nucleotides and it decreases the intracellular concentration of dUTP so that uracil cannot be incorporated into DNA. This chain is Deoxyuridine 5'-triphosphate nucleotidohydrolase, found in Burkholderia ambifaria (strain MC40-6).